Here is a 277-residue protein sequence, read N- to C-terminus: Shikimate dehydrogenase (NADP(+)) (277 aa).

Residues 18–20 (SKS) and Thr-65 contribute to the shikimate site. Lys-69 functions as the Proton acceptor in the catalytic mechanism. Position 81 (Glu-81) interacts with NADP(+). The shikimate site is built by Asn-90 and Asp-106. NADP(+) is bound by residues 130 to 134 (GAGGA), 154 to 159 (NRTFSK), and Met-217. Tyr-219 is a shikimate binding site. Gly-241 is an NADP(+) binding site.

This sequence belongs to the shikimate dehydrogenase family. In terms of assembly, homodimer.

The enzyme catalyses shikimate + NADP(+) = 3-dehydroshikimate + NADPH + H(+). Its pathway is metabolic intermediate biosynthesis; chorismate biosynthesis; chorismate from D-erythrose 4-phosphate and phosphoenolpyruvate: step 4/7. In terms of biological role, involved in the biosynthesis of the chorismate, which leads to the biosynthesis of aromatic amino acids. Catalyzes the reversible NADPH linked reduction of 3-dehydroshikimate (DHSA) to yield shikimate (SA). This chain is Shikimate dehydrogenase (NADP(+)), found in Vibrio campbellii (strain ATCC BAA-1116).